A 432-amino-acid polypeptide reads, in one-letter code: MTNVVVVGSQWGDEGKGKIVDWLSERADVVVRYQGGHNAGHTLVIDGISYKLSLLPSGVVRPGKLAVIGNGVVVDPHALIAEIGRLEVQGVKVTPENLRIADNATLILSLHRELDGMREDAASNSGTKIGTTRRGIGPAYEDKVGRRAIRVMDLADMEALSAKVDRILTHHNALRRGFGATEVSHETIMEELGSIAERILPFSETVWLLLDKKRRAGARILFEGAQGSLLDIDHGTYPYVTSSNTVAGQAAAGSGMGPGSLGYILGITKAYTTRVGEGPFPTELHDEIGQFLGEKGHEFGTVTGRKRRCGWFDAALVRQSVATNGITGIALTKLDVLDGLDELKICVGYKLDGQEIDHLPASQGAQARVEPIYVTLEGWKESTVGARKWADLPAQAIKYVRQVEELIGAPVALLSTSPERDDTILVTDPFED.

Residues 12–18 and 40–42 each bind GTP; these read GDEGKGK and GHT. The active-site Proton acceptor is Asp-13. Asp-13 and Gly-40 together coordinate Mg(2+). IMP contacts are provided by residues 13–16, 38–41, Thr-132, Arg-146, Gln-226, Thr-241, and Arg-305; these read DEGK and NAGH. Catalysis depends on His-41, which acts as the Proton donor. 301 to 307 provides a ligand contact to substrate; the sequence is TVTGRKR. Residues Arg-307, 333-335, and 415-417 each bind GTP; these read KLD and STS.

This sequence belongs to the adenylosuccinate synthetase family. Homodimer. It depends on Mg(2+) as a cofactor.

It is found in the cytoplasm. The enzyme catalyses IMP + L-aspartate + GTP = N(6)-(1,2-dicarboxyethyl)-AMP + GDP + phosphate + 2 H(+). It participates in purine metabolism; AMP biosynthesis via de novo pathway; AMP from IMP: step 1/2. Its function is as follows. Plays an important role in the de novo pathway of purine nucleotide biosynthesis. Catalyzes the first committed step in the biosynthesis of AMP from IMP. The protein is Adenylosuccinate synthetase of Agrobacterium fabrum (strain C58 / ATCC 33970) (Agrobacterium tumefaciens (strain C58)).